The sequence spans 556 residues: Phosphomethylpyrimidine synthase (556 aa).

Residues Asn191, Met220, Tyr249, His285, 305–307, 346–349, and Glu385 contribute to the substrate site; these read SRG and DALR. Zn(2+) is bound at residue His389. Substrate is bound at residue Tyr412. His453 is a Zn(2+) binding site. Positions 535, 538, and 543 each coordinate [4Fe-4S] cluster.

Belongs to the ThiC family. Requires [4Fe-4S] cluster as cofactor.

The catalysed reaction is 5-amino-1-(5-phospho-beta-D-ribosyl)imidazole + S-adenosyl-L-methionine = 4-amino-2-methyl-5-(phosphooxymethyl)pyrimidine + CO + 5'-deoxyadenosine + formate + L-methionine + 3 H(+). The protein operates within cofactor biosynthesis; thiamine diphosphate biosynthesis. Functionally, catalyzes the synthesis of the hydroxymethylpyrimidine phosphate (HMP-P) moiety of thiamine from aminoimidazole ribotide (AIR) in a radical S-adenosyl-L-methionine (SAM)-dependent reaction. The protein is Phosphomethylpyrimidine synthase of Chlorobaculum tepidum (strain ATCC 49652 / DSM 12025 / NBRC 103806 / TLS) (Chlorobium tepidum).